Here is a 214-residue protein sequence, read N- to C-terminus: Ribosomal RNA large subunit methyltransferase E (214 aa).

Glycine 60, tryptophan 62, aspartate 86, aspartate 102, and aspartate 127 together coordinate S-adenosyl-L-methionine. Lysine 167 acts as the Proton acceptor in catalysis.

Belongs to the class I-like SAM-binding methyltransferase superfamily. RNA methyltransferase RlmE family.

It is found in the cytoplasm. It carries out the reaction uridine(2552) in 23S rRNA + S-adenosyl-L-methionine = 2'-O-methyluridine(2552) in 23S rRNA + S-adenosyl-L-homocysteine + H(+). Functionally, specifically methylates the uridine in position 2552 of 23S rRNA at the 2'-O position of the ribose in the fully assembled 50S ribosomal subunit. The polypeptide is Ribosomal RNA large subunit methyltransferase E (Herminiimonas arsenicoxydans).